Reading from the N-terminus, the 603-residue chain is UvrABC system protein C (603 aa).

Residues 15–92 (DQPGCYLMKN…IQKHQPYYNI (78 aa)) enclose the GIY-YIG domain. The UVR domain occupies 197–232 (AQVKKQLTARMERAAGQLEFERAAEIRDQLHYIEVT).

The protein belongs to the UvrC family. In terms of assembly, interacts with UvrB in an incision complex.

The protein resides in the cytoplasm. In terms of biological role, the UvrABC repair system catalyzes the recognition and processing of DNA lesions. UvrC both incises the 5' and 3' sides of the lesion. The N-terminal half is responsible for the 3' incision and the C-terminal half is responsible for the 5' incision. The polypeptide is UvrABC system protein C (Limosilactobacillus fermentum (strain NBRC 3956 / LMG 18251) (Lactobacillus fermentum)).